A 359-amino-acid polypeptide reads, in one-letter code: Membrane-bound lytic murein transglycosylase C (359 aa).

The signal sequence occupies residues 1–16 (MKKYLALALIAPLLIS). Cys-17 is lipidated: N-palmitoyl cysteine. Cys-17 is lipidated: S-diacylglycerol cysteine.

This sequence belongs to the transglycosylase Slt family.

It localises to the cell outer membrane. It carries out the reaction Exolytic cleavage of the (1-&gt;4)-beta-glycosidic linkage between N-acetylmuramic acid (MurNAc) and N-acetylglucosamine (GlcNAc) residues in peptidoglycan, from either the reducing or the non-reducing ends of the peptidoglycan chains, with concomitant formation of a 1,6-anhydrobond in the MurNAc residue.. In terms of biological role, murein-degrading enzyme. May play a role in recycling of muropeptides during cell elongation and/or cell division. The polypeptide is Membrane-bound lytic murein transglycosylase C (Escherichia coli O139:H28 (strain E24377A / ETEC)).